The following is an 876-amino-acid chain: Leucine--tRNA ligase (876 aa).

The short motif at P42–H52 is the 'HIGH' region element. The short motif at K634–S638 is the 'KMSKS' region element. ATP is bound at residue K637.

Belongs to the class-I aminoacyl-tRNA synthetase family.

It is found in the cytoplasm. It carries out the reaction tRNA(Leu) + L-leucine + ATP = L-leucyl-tRNA(Leu) + AMP + diphosphate. The polypeptide is Leucine--tRNA ligase (Neisseria meningitidis serogroup B (strain ATCC BAA-335 / MC58)).